An 843-amino-acid polypeptide reads, in one-letter code: Proto-oncogene vav (843 aa).

Residues 1–119 (MELWRQCTHW…YTLSALSWTP (119 aa)) form the Calponin-homology (CH) domain. Residues 194 to 373 (KRCCCLREIQ…RDLAQCVNEV (180 aa)) form the DH domain. A PH domain is found at 402–504 (RPKIDGELKI…WMEQFEMAIS (103 aa)). Residues 515-564 (GHDFQMFSFEETTSCKACQMLLRGTFYQGYRCYRCRAPAHKECLGRVPPC) form a Phorbol-ester/DAG-type zinc finger. The SH3 1 domain maps to 590–658 (LGLPKMEVCQ…PCNRVRPYVH (69 aa)). In terms of domain architecture, SH2 spans 669–763 (WYAGPMERAG…SLDTTLQFPY (95 aa)). In terms of domain architecture, SH3 2 spans 780–840 (KYFGTAKARY…PSNYVEEDYS (61 aa)). Residues tyrosine 824 and tyrosine 842 each carry the phosphotyrosine modification.

In terms of assembly, interacts with SHB. Interacts with APS, DOCK2, GRB2, GRB3, DOCK2, SLA, TEC and ZNF655/VIK. Interacts with SIAH2; without leading to its degradation. Associates with BLNK, PLCG1, GRB2 and NCK1 in a B-cell antigen receptor-dependent fashion. Interacts with CBLB; which inhibits tyrosine phosphorylation and down-regulates activity. May interact with CCPG1. Interacts with CLNK. Interacts with THEMIS2. Interacts with NEK3 and this interaction is prolactin-dependent. Interacts with ITK. Interacts with PTK2B/PYK2. Interacts with HCK. Interacts with PTK2B/PYK2. Interacts (via SH2 domain) with SYK. Interacts with ANKRD54. Interacts with CD6. Interacts with LCP2; this interaction plays a role in TCR-mediated cytokine production. In terms of processing, phosphorylated by FYN. Phosphorylated on tyrosine residues by HCK in response to IFNG and bacterial lipopolysaccharide (LPS).

In terms of biological role, couples tyrosine kinase signals with the activation of the Rho/Rac GTPases, thus leading to cell differentiation and/or proliferation. The protein is Proto-oncogene vav (Vav1) of Rattus norvegicus (Rat).